Reading from the N-terminus, the 299-residue chain is tRNA pseudouridine synthase A (299 aa).

The active-site Nucleophile is aspartate 67. Tyrosine 125 serves as a coordination point for substrate.

It belongs to the tRNA pseudouridine synthase TruA family. In terms of assembly, homodimer.

It catalyses the reaction uridine(38/39/40) in tRNA = pseudouridine(38/39/40) in tRNA. In terms of biological role, formation of pseudouridine at positions 38, 39 and 40 in the anticodon stem and loop of transfer RNAs. The chain is tRNA pseudouridine synthase A from Parasynechococcus marenigrum (strain WH8102).